Consider the following 577-residue polypeptide: MHWLRKVQGLCTLWGTQMSSRTLYINSRQLVSLQWGHQEVPAKFNFASDVLDHWADMEKAGKRLPSPALWWVNGKGKELMWNFRELSENSQQAANVLSGACGLQRGDRVAVVLPRVPEWWLVILGCIRAGLIFMPGTIQMKSTDILYRLQMSKAKAIVAGDEVIQEVDTVASECPSLRIKLLVSEKSCDGWLNFKKLLNEASTTHHCVETGSQEASAIYFTSGTSGLPKMAEHSYSSLGLKAKMDAGWTGLQASDIMWTISDTGWILNILCSLMEPWALGACTFVHLLPKFDPLVILKTLSSYPIKSMMGAPIVYRMLLQQDLSSYKFPHLQNCVTVGESLLPETLENWRAQTGLDIRESYGQTETGLTCMVSKTMKIKPGYMGTAASCYDVQIIDDKGNVLPPGTEGDIGIRVKPIRPIGIFSGYVDNPDKTAANIRGDFWLLGDRGIKDEDGYFQFMGRANDIINSSGYRIGPSEVENALMEHPAVVETAVISSPDPVRGEVVKAFVVLASQFLSHDPEQLTKELQQHVKSVTAPYKYPRKIEFVLNLPKTVTGKIQRAKLRDKEWKMSGKARAQ.

The transit peptide at 1–46 (MHWLRKVQGLCTLWGTQMSSRTLYINSRQLVSLQWGHQEVPAKFNF) directs the protein to the mitochondrion. Gln139 lines the CoA pocket. ATP is bound by residues 221-229 (TSGTSGLPK), 359-364 (ESYGQT), Asp446, and Arg461. Position 364 (Thr364) interacts with substrate. Residue 469–471 (SGY) coordinates CoA. Position 472 (Arg472) interacts with substrate. Arg501 contributes to the CoA binding site. The residue at position 513 (Ser513) is a Phosphoserine. CoA contacts are provided by residues Lys532 and 540–542 (YPR). Lys557 lines the ATP pocket.

This sequence belongs to the ATP-dependent AMP-binding enzyme family. In terms of assembly, monomer. Mg(2+) serves as cofactor. It depends on Mn(2+) as a cofactor.

The protein localises to the mitochondrion. The catalysed reaction is a medium-chain fatty acid + ATP + CoA = a medium-chain fatty acyl-CoA + AMP + diphosphate. It carries out the reaction benzoate + ATP + CoA = benzoyl-CoA + AMP + diphosphate. The enzyme catalyses hexanoate + ATP + CoA = hexanoyl-CoA + AMP + diphosphate. It catalyses the reaction butanoate + ATP + CoA = butanoyl-CoA + AMP + diphosphate. The catalysed reaction is octanoate + ATP + CoA = octanoyl-CoA + AMP + diphosphate. It carries out the reaction decanoate + ATP + CoA = decanoyl-CoA + AMP + diphosphate. Its function is as follows. Catalyzes the activation of fatty acids by CoA to produce an acyl-CoA, the first step in fatty acid metabolism. Capable of activating medium-chain fatty acids (e.g. butyric (C4) to decanoic (C10) acids), and certain carboxylate-containing xenobiotics, e.g. benzoate. This Homo sapiens (Human) protein is Acyl-coenzyme A synthetase ACSM2A, mitochondrial (ACSM2A).